Consider the following 412-residue polypeptide: Intraflagellar transport protein che-13 (412 aa).

Disordered stretches follow at residues 1–21 (MEEE…GSAI) and 162–193 (PPKE…NFLD). Residues 165–193 (EEDEDTAVDEQDEDDDNDDIVEEPMNFLD) show a composition bias toward acidic residues. A coiled-coil region spans residues 302-393 (QLASMMSKFR…VQIGVFEQSI (92 aa)).

This sequence belongs to the IFT57 family. Component of the IFT complex B composed of at least che-2, che-13, dyf-1, dyf-3, dyf-6, dyf-11, dyf-13, ift-20, ift-74, ift-81, ifta-2, osm-1, osm-5 and osm-6.

It localises to the cytoplasm. It is found in the cytoskeleton. The protein resides in the cilium axoneme. Component of the intraflagellar transport (IFT) complex B required for transport of proteins in the motile cilium. May be required for ciliary entrance and transport of specific ciliary cargo proteins such as che-3 which are related to motility. Required for the formation of chemosensory cilia that detect chemosensory cues. The chain is Intraflagellar transport protein che-13 from Caenorhabditis elegans.